We begin with the raw amino-acid sequence, 606 residues long: Glucose methanol choline oxidoreductase atC (606 aa).

An N-terminal signal peptide occupies residues 1-19 (MRVFPTYIAVSGLFGGAFA). 8 N-linked (GlcNAc...) asparagine glycosylation sites follow: Asn-43, Asn-69, Asn-87, Asn-290, Asn-368, Asn-418, Asn-421, and Asn-552.

This sequence belongs to the GMC oxidoreductase family.

It catalyses the reaction terremutin + A = terreate + AH2. It functions in the pathway secondary metabolite biosynthesis. Its function is as follows. Glucose methanol choline oxidoreductase; part of the gene cluster that mediates the biosynthesis of terreic acid, a quinone epoxide inhibitor of Bruton's tyrosine kinase. The first step of the pathway is the synthesis of 6-methylsalicylic acid (6-MSA) by the 6-methylsalicylic acid synthase atX. In the biosynthesis of 6-MSA, atX utilizes one acetyl-CoA and three malonyl-CoAs as its substrates and catalyzes a series of programmed reactions including Claisen condensation, reduction, aldol cyclization, and the hydrolytic cleavage that yields 6-MSA. The 6-methylsalicylate 1-monooxygenase atA then catalyzes the decarboxylative hydroxylation of 6-MSA to 3-methylcatechol. The next step is the conversion of 3-methylcatechol to 3-methyl-1,2,4-benzenetriol by cytochrome P450 monooxygenase atE, which is enhanced by cytochrome P450 monooxygenase atG. Then, the epoxidase atD catalyzes the epoxidation and hydroxyl oxidation of 3-methyl-1,2,4-benzenetriol to terremutin. Lastly, GMC oxidoreductase atC oxidizes terremutin to terreic acid. The protein is Glucose methanol choline oxidoreductase atC of Aspergillus terreus (strain NIH 2624 / FGSC A1156).